The following is a 276-amino-acid chain: 2-dehydro-3-deoxyphosphooctonate aldolase (276 aa).

Belongs to the KdsA family.

The protein localises to the cytoplasm. It catalyses the reaction D-arabinose 5-phosphate + phosphoenolpyruvate + H2O = 3-deoxy-alpha-D-manno-2-octulosonate-8-phosphate + phosphate. The protein operates within carbohydrate biosynthesis; 3-deoxy-D-manno-octulosonate biosynthesis; 3-deoxy-D-manno-octulosonate from D-ribulose 5-phosphate: step 2/3. It functions in the pathway bacterial outer membrane biogenesis; lipopolysaccharide biosynthesis. In Xylella fastidiosa (strain M23), this protein is 2-dehydro-3-deoxyphosphooctonate aldolase.